The following is a 429-amino-acid chain: Adenylosuccinate synthetase (429 aa).

GTP is bound by residues 12 to 18 and 40 to 42; these read GDEGKGK and GHT. The active-site Proton acceptor is the Asp13. Mg(2+)-binding residues include Asp13 and Gly40. Residues 13-16, 38-41, Thr129, Arg143, Gln223, Thr238, and Arg302 each bind IMP; these read DEGK and NAGH. His41 (proton donor) is an active-site residue. Residue 298–304 participates in substrate binding; that stretch reads TVTGRPR. GTP contacts are provided by residues Arg304, 330–332, and 412–414; these read KLD and STS.

Belongs to the adenylosuccinate synthetase family. Homodimer. It depends on Mg(2+) as a cofactor.

The protein resides in the cytoplasm. The catalysed reaction is IMP + L-aspartate + GTP = N(6)-(1,2-dicarboxyethyl)-AMP + GDP + phosphate + 2 H(+). It functions in the pathway purine metabolism; AMP biosynthesis via de novo pathway; AMP from IMP: step 1/2. In terms of biological role, plays an important role in the de novo pathway of purine nucleotide biosynthesis. Catalyzes the first committed step in the biosynthesis of AMP from IMP. This chain is Adenylosuccinate synthetase, found in Paramagnetospirillum magneticum (strain ATCC 700264 / AMB-1) (Magnetospirillum magneticum).